Consider the following 154-residue polypeptide: Bacterial ferritin (154 aa).

In terms of domain architecture, Ferritin-like diiron spans 1 to 145; that stretch reads MQGNQAVVDY…QQLRLIELIG (145 aa). The Fe cation site is built by E18, E51, H54, E93, E127, and H130.

Belongs to the bacterioferritin family. As to quaternary structure, heterooligomer of 24 subunits, arranged as 12 dimers, that are packed together to form an approximately spherical molecule with a central cavity, in which large amounts of iron can be deposited.

The enzyme catalyses 4 Fe(2+) + O2 + 4 H(+) = 4 Fe(3+) + 2 H2O. It catalyses the reaction Fe(2+)(in) = Fe(2+)(out). Iron-storage protein, whose ferroxidase center binds Fe(2+), oxidizes it using dioxygen to Fe(3+), and participates in the subsequent Fe(3+) oxide mineral core formation within the central cavity of the BFR protein shell. This is Bacterial ferritin (bfrA) from Neisseria meningitidis serogroup A / serotype 4A (strain DSM 15465 / Z2491).